Consider the following 399-residue polypeptide: Formate-dependent phosphoribosylglycinamide formyltransferase (399 aa).

Residues 21–22 (EL) and E81 each bind N(1)-(5-phospho-beta-D-ribosyl)glycinamide. Residues R114, K156, 161-166 (SSGKGQ), 196-199 (EGFI), and E204 each bind ATP. The ATP-grasp domain maps to 119 to 314 (RLAAEELGLP…EFELHARAIL (196 aa)). Positions 273 and 285 each coordinate Mg(2+). N(1)-(5-phospho-beta-D-ribosyl)glycinamide-binding positions include D292, K361, and 368–369 (RR). A disordered region spans residues 370–399 (MGVAVANGESTDQARERAKLAASKVRPTRT).

It belongs to the PurK/PurT family. Homodimer.

The catalysed reaction is N(1)-(5-phospho-beta-D-ribosyl)glycinamide + formate + ATP = N(2)-formyl-N(1)-(5-phospho-beta-D-ribosyl)glycinamide + ADP + phosphate + H(+). It functions in the pathway purine metabolism; IMP biosynthesis via de novo pathway; N(2)-formyl-N(1)-(5-phospho-D-ribosyl)glycinamide from N(1)-(5-phospho-D-ribosyl)glycinamide (formate route): step 1/1. Its function is as follows. Involved in the de novo purine biosynthesis. Catalyzes the transfer of formate to 5-phospho-ribosyl-glycinamide (GAR), producing 5-phospho-ribosyl-N-formylglycinamide (FGAR). Formate is provided by PurU via hydrolysis of 10-formyl-tetrahydrofolate. The polypeptide is Formate-dependent phosphoribosylglycinamide formyltransferase (Dechloromonas aromatica (strain RCB)).